The sequence spans 425 residues: MSSDKVKNGNEPEESEESCGDESASYTTNSTTSRSKSPSSSTRSKRRGRRSTKSKPKSRAAYKYDTHVKENHGANIFGVAFNTLLGKDEPQVFATAGSNRVTVYECPRQGGMQLLHCYADPDPDEVFYTCAWSYDLKTSSPLLAAAGYRGVIRVIDVEQNEAVGNYIGHGQAINELKFHPHKLQLLLSGSKDHAIRLWNIQSHVCIAILGGVEGHRDEVLSIDFNMRGDRIVSSGMDHSLKLWCLNTPEFHHKIELSNTFSQEKSTLPFPTVTKHFPDFSTRDIHRNYVDCVQWFGNFVLSKSCENAIVCWKPGQLHQSFEQVKPSDSSCTIIAEFEYDECEIWFVRFGFNPWQKVIALGNQQGKVYVWELDPSDPEGAHMTTLHNSRSVATVRQIAFSRDASVLVYVCDDATVWRWNRRQTTSI.

Positions M1 to N10 are enriched in basic and acidic residues. The interval M1–Y64 is disordered. A compositionally biased stretch (acidic residues) spans E11–G20. S15 carries the phosphoserine modification. Positions D21–T42 are enriched in low complexity. A compositionally biased stretch (basic residues) spans R43–A60. WD repeat units lie at residues N71–L114, V126–N165, G168–I208, G214–K253, I284–E321, E340–A379, and R388–S424.

This sequence belongs to the WD repeat ESC family. In terms of assembly, component of the polycomb repressive complex 2 (PRC2, also known as the Esc/E(Z) complex), composed of Caf1-55, esc, E(z), Su(z)12, and possibly pho. PRC2 associates with the accessory components Jarid2 and jing to form the PRC2 Jarid2-jing variant (PRC2.2). PRC2 may also associate with Pcl and HDAC1/Rpd3 during early embryogenesis. This complex is distinct from the PRC1 complex, which contains many other PcG proteins like Pc, Ph, Psc, Su(z)2. The two complexes however cooperate and interact together during the first 3 hours of development to establish PcG silencing. Interacts with corto in vitro. Widely expressed.

The protein resides in the nucleus. Polycomb group (PcG) protein. While PcG proteins are generally required to maintain the transcriptionally repressive state of homeotic genes throughout development, this protein is specifically required during the first 6 hours of embryogenesis to establish the repressed state. Component of the Esc/E(z) complex, which methylates 'Lys-9' and 'Lys-27' residues of histone H3, leading to transcriptional repression of the affected target gene. The Esc/E(z) complex is necessary but not sufficient for the repression of homeotic target genes, suggesting that the recruitment of the distinct PRC1 complex is also required. The sequence is that of Polycomb protein esc (esc) from Drosophila melanogaster (Fruit fly).